The sequence spans 275 residues: Large ribosomal subunit protein uL2 (275 aa).

The segment covering 35–49 (DSQSSTAGRNNNGRI) has biased composition (polar residues). 2 disordered regions span residues 35–59 (DSQSSTAGRNNNGRITTRHKGGGHK) and 224–275 (AMNP…RHKR). Positions 50-59 (TTRHKGGGHK) are enriched in basic residues.

This sequence belongs to the universal ribosomal protein uL2 family. As to quaternary structure, part of the 50S ribosomal subunit. Forms a bridge to the 30S subunit in the 70S ribosome.

Functionally, one of the primary rRNA binding proteins. Required for association of the 30S and 50S subunits to form the 70S ribosome, for tRNA binding and peptide bond formation. It has been suggested to have peptidyltransferase activity; this is somewhat controversial. Makes several contacts with the 16S rRNA in the 70S ribosome. This Burkholderia cenocepacia (strain HI2424) protein is Large ribosomal subunit protein uL2.